The sequence spans 130 residues: Protein ApaG (130 aa).

Positions 3 to 127 (RAVTRQIEVT…FSLDSPDNKR (125 aa)) constitute an ApaG domain.

The polypeptide is Protein ApaG (Bradyrhizobium diazoefficiens (strain JCM 10833 / BCRC 13528 / IAM 13628 / NBRC 14792 / USDA 110)).